We begin with the raw amino-acid sequence, 186 residues long: Ribosome maturation factor RimM (186 aa).

Residues 93 to 168 form the PRC barrel domain; it reads EDDFYLVDLI…VLIDPPQEEN (76 aa). The tract at residues 163 to 186 is disordered; that stretch reads PPQEENAPEFGRNELGHDDGGEAA. The segment covering 173-186 has biased composition (basic and acidic residues); it reads GRNELGHDDGGEAA.

It belongs to the RimM family. In terms of assembly, binds ribosomal protein uS19.

It localises to the cytoplasm. In terms of biological role, an accessory protein needed during the final step in the assembly of 30S ribosomal subunit, possibly for assembly of the head region. Essential for efficient processing of 16S rRNA. May be needed both before and after RbfA during the maturation of 16S rRNA. It has affinity for free ribosomal 30S subunits but not for 70S ribosomes. This is Ribosome maturation factor RimM from Granulibacter bethesdensis (strain ATCC BAA-1260 / CGDNIH1).